The primary structure comprises 130 residues: Follitropin subunit beta (130 aa).

The N-terminal stretch at 1 to 20 (MMKLIQLCILFWCWRAICCH) is a signal peptide. Disulfide bonds link C22–C70, C36–C85, C39–C123, C47–C101, C51–C103, and C106–C113. N-linked (GlcNAc...) asparagine glycans are attached at residues N26 and N43.

It belongs to the glycoprotein hormones subunit beta family. Heterodimer. The active follitropin is a heterodimer composed of an alpha chain/CGA shared with other hormones and a unique beta chain/FSHB shown here.

The protein resides in the secreted. Together with the alpha chain CGA constitutes follitropin, the follicle-stimulating hormone, and provides its biological specificity to the hormone heterodimer. Binds FSHR, a G protein-coupled receptor, on target cells to activate downstream signaling pathways. Follitropin is involved in follicle development and spermatogenesis in reproductive organs. The protein is Follitropin subunit beta (Fshb) of Mus musculus (Mouse).